Here is a 191-residue protein sequence, read N- to C-terminus: Potassium-transporting ATPase KdpC subunit (191 aa).

Residues 6 to 26 (PALVLFILLTLLTGGVYPLLT) form a helical membrane-spanning segment.

The protein belongs to the KdpC family. The system is composed of three essential subunits: KdpA, KdpB and KdpC.

Its subcellular location is the cell inner membrane. Its function is as follows. Part of the high-affinity ATP-driven potassium transport (or Kdp) system, which catalyzes the hydrolysis of ATP coupled with the electrogenic transport of potassium into the cytoplasm. This subunit acts as a catalytic chaperone that increases the ATP-binding affinity of the ATP-hydrolyzing subunit KdpB by the formation of a transient KdpB/KdpC/ATP ternary complex. The chain is Potassium-transporting ATPase KdpC subunit from Klebsiella pneumoniae subsp. pneumoniae (strain ATCC 700721 / MGH 78578).